Consider the following 224-residue polypeptide: Casparian strip membrane protein 3 (224 aa).

Positions 1–30 (MESKKEGVASAPTSPESRRTRSNGKGKTIA) are disordered. Residues 1–57 (MESKKEGVASAPTSPESRRTRSNGKGKTIAEATPPSVTVVSTKVTPSPRGGWRKGAA) are Cytoplasmic-facing. A helical transmembrane segment spans residues 58-78 (ILDFILRLGAISSAIGAAAVM). Residues 79–105 (GNNEQILPFFTQFFQFHVQWDDFPMFQ) lie on the Extracellular side of the membrane. Residues 106 to 126 (FFVFANGAAVVFLILSLPFSI) form a helical membrane-spanning segment. Over 127 to 138 (VCIVRPFAVGPR) the chain is Cytoplasmic. A helical membrane pass occupies residues 139-159 (LLLVIVDIFAMALVIAAASAA). The Extracellular portion of the chain corresponds to 160–191 (AAVVYLAHNGSQDANWIAICQQYTDFCQVTSQ). Asn168 carries N-linked (GlcNAc...) asparagine glycosylation. Residues 192–212 (AVVASFVAAVFLICLIVLSSV) form a helical membrane-spanning segment. Residues 213–224 (ALKKGLKREFGW) lie on the Cytoplasmic side of the membrane.

The protein belongs to the Casparian strip membrane proteins (CASP) family. Homodimer and heterodimers.

The protein resides in the cell membrane. In terms of biological role, regulates membrane-cell wall junctions and localized cell wall deposition. Required for establishment of the Casparian strip membrane domain (CSD) and the subsequent formation of Casparian strips, a cell wall modification of the root endodermis that determines an apoplastic barrier between the intraorganismal apoplasm and the extraorganismal apoplasm and prevents lateral diffusion. In Vigna unguiculata (Cowpea), this protein is Casparian strip membrane protein 3.